The following is a 129-amino-acid chain: Small ribosomal subunit protein uS11c (129 aa).

This sequence belongs to the universal ribosomal protein uS11 family. Part of the 30S ribosomal subunit.

The protein resides in the plastid. It localises to the chloroplast. The chain is Small ribosomal subunit protein uS11c from Oltmannsiellopsis viridis (Marine flagellate).